Consider the following 679-residue polypeptide: Methionine--tRNA ligase (679 aa).

Residues proline 15–histidine 25 carry the 'HIGH' region motif. Residues cysteine 147, cysteine 150, cysteine 160, and cysteine 163 each contribute to the Zn(2+) site. The 'KMSKS' region motif lies at lysine 332–serine 336. ATP is bound at residue threonine 335. The tRNA-binding domain occupies aspartate 578 to lysine 679.

The protein belongs to the class-I aminoacyl-tRNA synthetase family. MetG type 1 subfamily. As to quaternary structure, homodimer. The cofactor is Zn(2+).

The protein localises to the cytoplasm. It catalyses the reaction tRNA(Met) + L-methionine + ATP = L-methionyl-tRNA(Met) + AMP + diphosphate. Functionally, is required not only for elongation of protein synthesis but also for the initiation of all mRNA translation through initiator tRNA(fMet) aminoacylation. This chain is Methionine--tRNA ligase, found in Parabacteroides distasonis (strain ATCC 8503 / DSM 20701 / CIP 104284 / JCM 5825 / NCTC 11152).